The chain runs to 610 residues: Elongation factor 4 (610 aa).

The tr-type G domain occupies 11 to 193; the sequence is EKIRNFSIIA…QIVEKVPAPT (183 aa). Residues 23–28 and 140–143 contribute to the GTP site; these read DHGKST and NKID.

Belongs to the TRAFAC class translation factor GTPase superfamily. Classic translation factor GTPase family. LepA subfamily.

The protein resides in the cell membrane. It catalyses the reaction GTP + H2O = GDP + phosphate + H(+). In terms of biological role, required for accurate and efficient protein synthesis under certain stress conditions. May act as a fidelity factor of the translation reaction, by catalyzing a one-codon backward translocation of tRNAs on improperly translocated ribosomes. Back-translocation proceeds from a post-translocation (POST) complex to a pre-translocation (PRE) complex, thus giving elongation factor G a second chance to translocate the tRNAs correctly. Binds to ribosomes in a GTP-dependent manner. The sequence is that of Elongation factor 4 from Streptococcus pyogenes serotype M3 (strain ATCC BAA-595 / MGAS315).